The following is a 1121-amino-acid chain: Cuscuta receptor 1 (1121 aa).

The N-terminal stretch at 1–20 is a signal peptide; it reads MGNIKFLLLVFFLIVVVVNG. The Extracellular segment spans residues 21–1058; it reads CWEEERNALL…EESSELEDIQ (1038 aa). N-linked (GlcNAc...) asparagine glycosylation is present at N91. LRR repeat units lie at residues 98–122, 126–152, 185–209, 210–233, 234–259, 260–282, 284–308, and 309–331; these read FKSL…GFSK, LPNL…CWIS, LSNL…ALGE, LRNL…SLKI, FPSL…IIDL, SNLE…KGNK, MTSL…SLKS, and FSSL…IYAL. N224 carries an N-linked (GlcNAc...) asparagine glycan. 3 N-linked (GlcNAc...) asparagine glycosylation sites follow: N298, N321, and N333. An LRR 9 repeat occupies 334–360; the sequence is LSTVEYLYFKGSSLNDNFLPNIGQMTS. N-linked (GlcNAc...) asparagine glycans are attached at residues N372 and N406. LRR repeat units follow at residues 383–406, 407–432, 433–457, 459–479, 507–531, 556–580, 581–605, 607–628, 630–654, 655–678, 680–701, 702–725, 726–749, 751–772, 773–796, 797–820, 822–846, 914–938, 939–961, 962–986, and 988–1012; these read LKYI…CLGN, LTSL…IWRR, LTSL…QFSD, KKLI…EYQN, QYDL…LLEN, HLHL…MSLA, FPKL…ISGI, LTIL…LAVV, SPQL…EFRP, HVLS…VFLS, LITL…TRDN, RRLL…ICNL, KIIN…VSSL, LKHI…IFNF, SSLI…IGSL, SNLN…ICML, NLSI…YLTQ, LKYM…LGNM, SNIH…TFSN, LQEI…LLEL, and SLAV…QFGT. N-linked (GlcNAc...) asparagine glycosylation is found at N531, N576, and N588. N-linked (GlcNAc...) asparagine glycosylation is present at N689. N771 is a glycosylation site (N-linked (GlcNAc...) asparagine). N-linked (GlcNAc...) asparagine glycans are attached at residues N822, N937, N945, N976, N998, N1014, and N1041. Residues 1059-1079 traverse the membrane as a helical segment; it reads CFYIGFVVSFGAILLGLAAAL. Residues 1080–1121 are Cytoplasmic-facing; the sequence is CLNRHWRRAWFRMIEALMFYCYYFVLDNIVTPIKSRWYKNVG.

It belongs to the RLP family. As to quaternary structure, interacts with an 11 kDa glycine-rich protein (GRP) of C.reflexa. Interacts with SOBIR1 and SOBIR1-like kinases; presence or absence of GRP has no effect on interaction.

Its subcellular location is the cell membrane. It localises to the cell surface. Functionally, involved in plant defense. Contributes to resistance against parasitic plant C.reflexa. Acts as a receptor for the 11 kDa glycine-rich protein (GRP) of C.reflexa inducing immune responses such as emission of stress-related phytohormone ethylene, reactive oxygen species (ROS) release, and hypersensitive cell death. Recognizes a specific pathogen-associated molecular pattern (PAMP), a cysteine-rich peptide 21 (crip21), from GRP located on the cell wall of C.reflexa. The sequence is that of Cuscuta receptor 1 from Solanum lycopersicum (Tomato).